The following is a 176-amino-acid chain: Ferritin, spleen middle subunit (176 aa).

The Ferritin-like diiron domain maps to glutamine 7–aspartate 156. Positions 24, 59, 62, 104, and 138 each coordinate Fe cation.

Belongs to the ferritin family. In terms of assembly, in spleen, forms a homomer. The functional molecule forms a roughly spherical shell with a diameter of 12 nm and contains a central cavity into which the insoluble mineral iron core is deposited. Spleen (at protein level).

The catalysed reaction is 4 Fe(2+) + O2 + 4 H(+) = 4 Fe(3+) + 2 H2O. Stores iron in a soluble, non-toxic, readily available form. Important for iron homeostasis. Has ferroxidase activity. Iron is taken up in the ferrous form and deposited as ferric hydroxides after oxidation. The polypeptide is Ferritin, spleen middle subunit (Trematomus bernacchii (Emerald rockcod)).